The sequence spans 112 residues: ATP synthase subunit c (112 aa).

2 helical membrane-spanning segments follow: residues 36 to 56 (FSVL…AIGM) and 81 to 101 (MFIA…IALI).

Belongs to the ATPase C chain family. As to quaternary structure, F-type ATPases have 2 components, F(1) - the catalytic core - and F(0) - the membrane proton channel. F(1) has five subunits: alpha(3), beta(3), gamma(1), delta(1), epsilon(1). F(0) has three main subunits: a(1), b(2) and c(10-14). The alpha and beta chains form an alternating ring which encloses part of the gamma chain. F(1) is attached to F(0) by a central stalk formed by the gamma and epsilon chains, while a peripheral stalk is formed by the delta and b chains.

The protein resides in the cell inner membrane. Its function is as follows. F(1)F(0) ATP synthase produces ATP from ADP in the presence of a proton or sodium gradient. F-type ATPases consist of two structural domains, F(1) containing the extramembraneous catalytic core and F(0) containing the membrane proton channel, linked together by a central stalk and a peripheral stalk. During catalysis, ATP synthesis in the catalytic domain of F(1) is coupled via a rotary mechanism of the central stalk subunits to proton translocation. This chain is ATP synthase subunit c, found in Campylobacter jejuni subsp. jejuni serotype O:2 (strain ATCC 700819 / NCTC 11168).